Reading from the N-terminus, the 78-residue chain is Large ribosomal subunit protein uL23 (78 aa).

It belongs to the universal ribosomal protein uL23 family. Part of the 50S ribosomal subunit. Contacts protein L29.

In terms of biological role, binds to 23S rRNA. One of the proteins that surrounds the polypeptide exit tunnel on the outside of the ribosome. This Nanoarchaeum equitans (strain Kin4-M) protein is Large ribosomal subunit protein uL23.